A 102-amino-acid polypeptide reads, in one-letter code: Small ribosomal subunit protein uS10 (102 aa).

This sequence belongs to the universal ribosomal protein uS10 family. Part of the 30S ribosomal subunit.

In terms of biological role, involved in the binding of tRNA to the ribosomes. The sequence is that of Small ribosomal subunit protein uS10 from Gluconobacter oxydans (strain 621H) (Gluconobacter suboxydans).